The following is a 547-amino-acid chain: Sodium/hydrogen exchanger 9B2 (547 aa).

A disordered region spans residues 1–68 (MEDEDKTAEC…PQDSPTEPNG (68 aa)). The Cytoplasmic segment spans residues 1-86 (MEDEDKTAEC…ACPPRGCLAR (86 aa)). Residues 23 to 45 (APPHHELQEERVMSLRGTDRSEP) show a composition bias toward basic and acidic residues. A Phosphoserine modification is found at S49. Residues 87–104 (VITNGTMVVLLWAMVWSV) traverse the membrane as a helical segment. Residues 105–113 (TGPECLPGG) lie on the Extracellular side of the membrane. The chain crosses the membrane as a helical span at residues 114-133 (NLFGIIILFYCSITGGKLFG). The Cytoplasmic portion of the chain corresponds to 134–144 (LIKFPTLPPLP). A helical transmembrane segment spans residues 145–161 (PLLGMLLAGFLLRNIPV). Topologically, residues 162–171 (INDSVRIQHK) are extracellular. The chain crosses the membrane as a helical span at residues 172 to 189 (WSSSLRSIALSVILVRAG). Residues 190 to 200 (LGLDSKALRKL) are Cytoplasmic-facing. The chain crosses the membrane as a helical span at residues 201 to 227 (KGVCVRLAMGPCIVEACASAILSHFLM). Residues 228–233 (GLPWQW) are Extracellular-facing. Residues 234 to 242 (GFILGFVVG) form a helical membrane-spanning segment. Residues 243–270 (AVSPAVVVPSMLLLQEGGYGVGKGIPTL) lie on the Cytoplasmic side of the membrane. Residues V244, G275, D278, and D279 each coordinate Na(+). A helical transmembrane segment spans residues 271–290 (LMAAGSFDDILAITGFNTCL). Residues 291–300 (GVAFSTGSTV) are Extracellular-facing. The helical transmembrane segment at 301-324 (FNIFRGILEVVIGVAAGSFLGFFI) threads the bilayer. Residues 325–339 (QYFPSRDQDNLVWKR) are Cytoplasmic-facing. The chain crosses the membrane as a helical span at residues 340–357 (AFLVLGFAVLAVFSSVYF). Residues 358 to 361 (SFPG) lie on the Extracellular side of the membrane. The helical transmembrane segment at 362-373 (SGGLCTLVMAFL) threads the bilayer. The Cytoplasmic portion of the chain corresponds to 374-390 (AGMRWTDKKSEVEKVIA). Residues 391–411 (VTWDVFQPLLFGLIGAEVSIV) form a helical membrane-spanning segment. The Extracellular portion of the chain corresponds to 412 to 417 (SLRAET). Residues 418–440 (VGLCVATLSIAVLIRILTTFLMV) traverse the membrane as a helical segment. Residues 441 to 461 (CFAGFNIKEKIFISFAWLPKA) are Cytoplasmic-facing. A helical transmembrane segment spans residues 462–473 (TVQAAIGSVALD). The Extracellular portion of the chain corresponds to 474 to 486 (TARSHGEKQLEDY). The helical transmembrane segment at 487–509 (GMDVLTVAFLAILITAPIGSLLI) threads the bilayer. Over 510–547 (GLLGPRVLQKSEHRTEEEVQGETSAHIQRKPEDSITEA) the chain is Cytoplasmic. Positions 522-547 (HRTEEEVQGETSAHIQRKPEDSITEA) are disordered. Residues 538–547 (RKPEDSITEA) are compositionally biased toward basic and acidic residues.

The protein belongs to the monovalent cation:proton antiporter 1 (CPA1) transporter (TC 2.A.36) family. Homodimer; dimerization is essential for SLC9B2 activity. Lipids seem to play a role in the stabilization of the dimerization subdomain. In terms of tissue distribution, widely expressed. However expression seems to be restricted to specific cell types within individual organs, e.g. osteoclasts in the bone, distal tubules of the kidney or beta-cells of Langerhans islets. In sperm specifically present in the principal piece of sperm tail (at protein level).

It localises to the cell membrane. The protein resides in the mitochondrion membrane. It is found in the endosome membrane. The protein localises to the lysosome membrane. Its subcellular location is the recycling endosome membrane. It localises to the cytoplasmic vesicle. The protein resides in the secretory vesicle. It is found in the synaptic vesicle membrane. The protein localises to the cell projection. Its subcellular location is the cilium. It localises to the flagellum membrane. The protein resides in the basolateral cell membrane. It is found in the apical cell membrane. It catalyses the reaction Na(+)(in) + H(+)(out) = Na(+)(out) + H(+)(in). It carries out the reaction Li(+)(out) + H(+)(in) = Li(+)(in) + H(+)(out). The enzyme catalyses Li(+)(in) + Na(+)(out) = Li(+)(out) + Na(+)(in). Allosterically inhibited by the N-terminal domain. Inhibited by phloretin. Functionally, electroneutral Na(+) Li(+)/H(+) antiporter that extrudes Na(+) or Li(+) in exchange for external protons across the membrane. Uses the proton gradient/membrane potential to extrude sodium. Contributes to the regulation of intracellular pH and sodium homeostasis. Also able to mediate Na(+)/Li(+) antiporter activity in kidney. May play a physiological role in renal tubular function and blood pressure homeostasis. Plays an important role for insulin secretion and clathrin-mediated endocytosis in beta-cells. Involved in sperm motility and fertility. It is controversial whether SLC9B2 plays a role in osteoclast differentiation or not. This Mus musculus (Mouse) protein is Sodium/hydrogen exchanger 9B2.